Here is a 151-residue protein sequence, read N- to C-terminus: Ubiquitin-conjugating enzyme E2 W (151 aa).

A UBC core domain is found at Ser3–Cys151. Catalysis depends on Cys91, which acts as the Glycyl thioester intermediate.

This sequence belongs to the ubiquitin-conjugating enzyme family.

It is found in the nucleus. It catalyses the reaction S-ubiquitinyl-[E1 ubiquitin-activating enzyme]-L-cysteine + [E2 ubiquitin-conjugating enzyme]-L-cysteine = [E1 ubiquitin-activating enzyme]-L-cysteine + S-ubiquitinyl-[E2 ubiquitin-conjugating enzyme]-L-cysteine.. The enzyme catalyses S-ubiquitinyl-[E1 ubiquitin-activating enzyme]-L-cysteine + [acceptor protein]-N-terminal-amino acid = [E1 ubiquitin-activating enzyme]-L-cysteine + N-terminal-ubiquitinyl-[acceptor protein].. It participates in protein modification; protein ubiquitination. Accepts ubiquitin from the E1 complex and catalyzes its covalent attachment to other proteins. Catalyzes monoubiquitination. Involved in degradation of misfolded chaperone substrate and DNA repair. In Xenopus tropicalis (Western clawed frog), this protein is Ubiquitin-conjugating enzyme E2 W (ube2w).